We begin with the raw amino-acid sequence, 677 residues long: Vertnin (677 aa).

Disordered stretches follow at residues 356–376 and 458–490; these read GSTGELSPGDSTEQDYWSSPE and HSGSSEEGSDADKSQSPRSQMSPSKFDRQKLSP. Basic and acidic residues predominate over residues 458–472; that stretch reads HSGSSEEGSDADKSQ.

The protein belongs to the vertnin family.

It is found in the nucleus. Its function is as follows. Functions as a transcriptional repressor that modulates bmp2b expression during dorsoventral patterning. This is Vertnin (vrtn) from Danio rerio (Zebrafish).